The sequence spans 459 residues: Xylose/arabinose-binding protein XacG (459 aa).

A helical membrane pass occupies residues 19 to 36 (ALTVGAAAGIAGCTGGGG). The segment at 27–68 (GIAGCTGGGGTETESTESGNGNGSGGSTDDTETSGSSSGESW) is disordered.

It belongs to the bacterial solute-binding protein 1 family. In terms of assembly, the complex is composed of two ATP-binding proteins (XacJ and XacK), two transmembrane proteins (XacH and XacI) and a solute-binding protein (XacG).

Its subcellular location is the cell membrane. Part of the ABC transporter complex XacGHIJK involved in the uptake of xylose and arabinose. This chain is Xylose/arabinose-binding protein XacG, found in Haloferax volcanii (strain ATCC 29605 / DSM 3757 / JCM 8879 / NBRC 14742 / NCIMB 2012 / VKM B-1768 / DS2) (Halobacterium volcanii).